Reading from the N-terminus, the 234-residue chain is Large ribosomal subunit protein uL1 (234 aa).

It belongs to the universal ribosomal protein uL1 family. In terms of assembly, part of the 50S ribosomal subunit.

Its function is as follows. Binds directly to 23S rRNA. The L1 stalk is quite mobile in the ribosome, and is involved in E site tRNA release. Functionally, protein L1 is also a translational repressor protein, it controls the translation of the L11 operon by binding to its mRNA. In Erwinia tasmaniensis (strain DSM 17950 / CFBP 7177 / CIP 109463 / NCPPB 4357 / Et1/99), this protein is Large ribosomal subunit protein uL1.